Consider the following 277-residue polypeptide: Shikimate dehydrogenase (NADP(+)) (277 aa).

Residues 20–22 and threonine 67 contribute to the shikimate site; that span reads SLS. Residue lysine 71 is the Proton acceptor of the active site. Residue aspartate 83 participates in NADP(+) binding. Residues asparagine 92 and aspartate 107 each coordinate shikimate. Residues 131–135 and isoleucine 219 contribute to the NADP(+) site; that span reads GAGGV. Residue tyrosine 221 participates in shikimate binding. An NADP(+)-binding site is contributed by glycine 242.

Belongs to the shikimate dehydrogenase family. In terms of assembly, homodimer.

It carries out the reaction shikimate + NADP(+) = 3-dehydroshikimate + NADPH + H(+). Its pathway is metabolic intermediate biosynthesis; chorismate biosynthesis; chorismate from D-erythrose 4-phosphate and phosphoenolpyruvate: step 4/7. Its function is as follows. Involved in the biosynthesis of the chorismate, which leads to the biosynthesis of aromatic amino acids. Catalyzes the reversible NADPH linked reduction of 3-dehydroshikimate (DHSA) to yield shikimate (SA). The polypeptide is Shikimate dehydrogenase (NADP(+)) (Pelobacter propionicus (strain DSM 2379 / NBRC 103807 / OttBd1)).